A 339-amino-acid polypeptide reads, in one-letter code: Oncoprotein MEQ (339 aa).

A disordered region spans residues Met-1–Asp-80. Residue Ser-42 is modified to Phosphoserine; by host CDK2. The tract at residues Lys-57–Lys-84 is basic motif. Positions Lys-57–His-120 constitute a bZIP domain. The span at Leu-60–Lys-77 shows a compositional bias: basic residues. Residues Arg-62–Gln-78 carry the Nuclear localization signal motif. Positions Leu-85–Leu-113 are leucine-zipper. The tract at residues His-120–Pro-339 is transactivation domain. Pro residues predominate over residues Pro-145–Pro-160. The disordered stretch occupies residues Pro-145 to Ile-172.

Belongs to the bZIP family. Jun subfamily. As to quaternary structure, homodimer. Interacts with host JUN; this interaction allows MEQ to engage in host cell processes by disguising itself as a cellular JUN. In terms of processing, phosphorylated by host CDK2; this phosphorylation greatly reduces the DNA binding activity of MEQ.

The protein resides in the host nucleus. It localises to the host nucleolus. Functions as a DNA-binding transcription factor. Promotes transformation, host cell growth, host cell-cycle progression through G1/S phase, and possesses antiapoptotic activity. Forms functional heterodimers with host JUN. These heterodimers bind with high affinity DNA sequences called MEQ-responsive elements MERE I (TGACA/GTCA), while MEQ homodimers bind a second type of sites termed MERE II (ACACA). Both homo and heterodimerization of MEQ are required for oncogenesis. This chain is Oncoprotein MEQ (MDV005), found in Gallid herpesvirus 2 (strain Chicken/Md5/ATCC VR-987) (GaHV-2).